The chain runs to 167 residues: Insertion element IS1 1 protein InsB (167 aa).

This sequence belongs to the transposase 27 family.

Its function is as follows. Absolutely required for transposition of IS1. This is Insertion element IS1 1 protein InsB (insB1) from Escherichia coli (strain K12).